The chain runs to 352 residues: Protein-glutamate methylesterase/protein-glutamine glutaminase (352 aa).

One can recognise a Response regulatory domain in the interval 5–123 (RILIVDDSVI…SKEKAIEYIR (119 aa)). D56 carries the post-translational modification 4-aspartylphosphate. Residues 166–352 (EIVAIGVSTG…LAEEIIRRIG (187 aa)) form the CheB-type methylesterase domain. Catalysis depends on residues S173, H200, and D296.

This sequence belongs to the CheB family. Post-translationally, phosphorylated by CheA. Phosphorylation of the N-terminal regulatory domain activates the methylesterase activity.

Its subcellular location is the cytoplasm. It carries out the reaction [protein]-L-glutamate 5-O-methyl ester + H2O = L-glutamyl-[protein] + methanol + H(+). It catalyses the reaction L-glutaminyl-[protein] + H2O = L-glutamyl-[protein] + NH4(+). Functionally, involved in chemotaxis. Part of a chemotaxis signal transduction system that modulates chemotaxis in response to various stimuli. Catalyzes the demethylation of specific methylglutamate residues introduced into the chemoreceptors (methyl-accepting chemotaxis proteins or MCP) by CheR. Also mediates the irreversible deamidation of specific glutamine residues to glutamic acid. The protein is Protein-glutamate methylesterase/protein-glutamine glutaminase of Trichodesmium erythraeum (strain IMS101).